A 437-amino-acid polypeptide reads, in one-letter code: Sonic hedgehog protein (437 aa).

The signal sequence occupies residues 1–24 (MLLLLARCFLVILASSLLVCPGLA). Residue Cys25 is the site of N-palmitoyl cysteine attachment. The Cardin-Weintraub signature appears at 33-39 (KRRHPKK). Residues Glu90, Glu91, Asp96, Thr126, Glu127, Asp130, and Asp132 each coordinate Ca(2+). 3 residues coordinate Zn(2+): His141, Asp148, and His183. Gly198 is lipidated: Cholesterol glycine ester. The N-linked (GlcNAc...) asparagine glycan is linked to Asn279.

It belongs to the hedgehog family. As to quaternary structure, interacts with HHATL/GUP1 which negatively regulates HHAT-mediated palmitoylation of the SHH N-terminus. Interacts with BOC and CDON. Interacts with HHIP. Interacts with DISP1 via its cholesterol anchor. Interacts with SCUBE2. Interacts with glypican GPC3. In terms of assembly, multimer. The C-terminal domain displays an autoproteolysis activity and a cholesterol transferase activity. Both activities result in the cleavage of the full-length protein and covalent attachment of a cholesterol moiety to the C-terminal of the newly generated N-terminal fragment (ShhN). Cholesterylation is required for the sonic hedgehog protein N-product targeting to lipid rafts and multimerization. ShhN is the active species in both local and long-range signaling, whereas the C-product (ShhC) is degraded in the endoplasmic reticulum. In terms of processing, N-palmitoylation by HHAT of ShhN is required for sonic hedgehog protein N-product multimerization and full activity. It is a prerequisite for the membrane-proximal positioning and the subsequent shedding of this N-terminal peptide. Post-translationally, the lipidated N- and C-terminal peptides of ShhNp can be cleaved (shedding). The N-terminal palmitoylated peptide is cleaved at the Cardin-Weintraub (CW) motif site. The cleavage reduced the interactions with heparan sulfate. The cleavage is enhanced by SCUBE2. In terms of tissue distribution, expressed in a number of embryonic tissues including the notochord, ventral neural tube, floor plate, lung bud, zone of polarizing activity and posterior distal mesenchyme of limbs. In the adult, expressed in lung and neural retina.

The protein localises to the endoplasmic reticulum membrane. Its subcellular location is the golgi apparatus membrane. It is found in the cell membrane. The catalysed reaction is glycyl-L-cysteinyl-[protein] + cholesterol + H(+) = [protein]-C-terminal glycyl cholesterol ester + N-terminal L-cysteinyl-[protein]. Its function is as follows. The C-terminal part of the sonic hedgehog protein precursor displays an autoproteolysis and a cholesterol transferase activity. Both activities result in the cleavage of the full-length protein into two parts (ShhN and ShhC) followed by the covalent attachment of a cholesterol moiety to the C-terminal of the newly generated ShhN. Both activities occur in the reticulum endoplasmic. Once cleaved, ShhC is degraded in the endoplasmic reticulum. The dually lipidated sonic hedgehog protein N-product (ShhNp) is a morphogen which is essential for a variety of patterning events during development. Induces ventral cell fate in the neural tube and somites. Involved in the patterning of the anterior-posterior axis of the developing limb bud. Essential for axon guidance. Binds to the patched (PTCH1) receptor, which functions in association with smoothened (SMO), to activate the transcription of target genes. In the absence of SHH, PTCH1 represses the constitutive signaling activity of SMO. The protein is Sonic hedgehog protein of Mus musculus (Mouse).